Reading from the N-terminus, the 2297-residue chain is Xin actin-binding repeat-containing protein 1 (2297 aa).

The span at 1–11 (MAEVAKQKKAT) shows a compositional bias: basic and acidic residues. The disordered stretch occupies residues 1-28 (MAEVAKQKKATEAVCGDEDFPPPPPPLP). Xin repeat units follow at residues 104–119 (GEVQ…WTLD), 139–154 (GDVK…STFD), 169–184 (GDVR…QPLD), 208–223 (GDVT…KPLD), 248–263 (GDVK…DPCC), 286–301 (SDFK…QPLD), 323–338 (GGVD…QPLD), 362–377 (ADVH…QPLS), and 396–411 (GNVG…QPMD). The segment covering 433–442 (GEVQDKRMQF) has biased composition (basic and acidic residues). Residues 433-461 (GEVQDKRMQFEKSTAGKTAGDSGNKVQND) form a disordered region. Xin repeat units follow at residues 464–479 (GDVK…LPLN), 494–509 (GDVK…TPLY), 532–547 (GNVQ…RPLD), 570–585 (DDTR…QPLD), 605–620 (SNVK…KPMD), 638–653 (ADVK…QPLD), 677–692 (VNVK…EPLD), 715–730 (GDVS…KSLG), 747–762 (GSVH…QPIG), 779–794 (GDVG…LSLD), 818–833 (VNVK…QPLY), 856–871 (GDVR…KPLD), 893–908 (GDVK…QPLD), and 928–943 (KCVQ…EQAS). Serine 952 is modified (phosphoserine). Xin repeat units lie at residues 959–974 (GDVR…QPID), 997–1012 (GDVK…QSLD), and 1033–1048 (ADVK…TPLD). 4 disordered regions span residues 1617 to 1680 (PSSH…KDQK), 1866 to 1900 (KENI…VPSI), 2147 to 2191 (SAAR…PRRK), and 2243 to 2297 (ELSS…TEKH). 2 stretches are compositionally biased toward low complexity: residues 1618 to 1630 (SSHT…VSVT) and 1644 to 1656 (SVSS…KNSS). 2 stretches are compositionally biased toward basic and acidic residues: residues 1876 to 1885 (SNKDELHFTS) and 2151 to 2162 (KPAESPTDKPKT). Over residues 2166–2180 (QSNAGSSSSQNSSAS) the composition is skewed to low complexity. The segment covering 2259–2278 (GMTSPVLQRSGQSFSSNSLS) has biased composition (polar residues).

It belongs to the Xin family. As to expression, expressed at intercalated disks in the heart (at protein level).

The protein localises to the cell junction. It is found in the adherens junction. It localises to the desmosome. Its function is as follows. Positively regulates organization of the outer plexiform layer and Muller glia cells in the retina. May protect actin filaments from depolymerization. May play a role in development of normal skeletal muscle morphology and muscle fiber type composition. This is Xin actin-binding repeat-containing protein 1 from Danio rerio (Zebrafish).